The sequence spans 395 residues: Protein UNIFOLIATA (395 aa).

Disordered regions lie at residues 147-170 (SQEG…GGGS) and 185-223 (QIRR…GERQ). The span at 202-211 (EEGEEEEEDN) shows a compositional bias: acidic residues. DNA-binding regions lie at residues 224 to 228 (REHPF), 293 to 300 (NKPKMRHY), and 364 to 367 (YGPT).

Belongs to the FLO/LFY family. As to expression, highly expressed in leaf, leaflet, inflorescence and lateral shoot primordia on the main shoot axis, and in floral organ and carpel primordia.

It localises to the nucleus. Functionally, may regulate indeterminacy during leaf and flower development. The polypeptide is Protein UNIFOLIATA (UNI) (Pisum sativum (Garden pea)).